A 358-amino-acid chain; its full sequence is Peptide chain release factor 1 (358 aa).

An N5-methylglutamine modification is found at Gln237.

Belongs to the prokaryotic/mitochondrial release factor family. Post-translationally, methylated by PrmC. Methylation increases the termination efficiency of RF1.

It localises to the cytoplasm. Its function is as follows. Peptide chain release factor 1 directs the termination of translation in response to the peptide chain termination codons UAG and UAA. This chain is Peptide chain release factor 1, found in Mycoplasma mobile (strain ATCC 43663 / 163K / NCTC 11711) (Mesomycoplasma mobile).